A 513-amino-acid chain; its full sequence is ATP synthase subunit alpha (513 aa).

169 to 176 (GDRQIGKT) contributes to the ATP binding site.

This sequence belongs to the ATPase alpha/beta chains family. In terms of assembly, F-type ATPases have 2 components, CF(1) - the catalytic core - and CF(0) - the membrane proton channel. CF(1) has five subunits: alpha(3), beta(3), gamma(1), delta(1), epsilon(1). CF(0) has three main subunits: a(1), b(2) and c(9-12). The alpha and beta chains form an alternating ring which encloses part of the gamma chain. CF(1) is attached to CF(0) by a central stalk formed by the gamma and epsilon chains, while a peripheral stalk is formed by the delta and b chains.

It is found in the cell inner membrane. The enzyme catalyses ATP + H2O + 4 H(+)(in) = ADP + phosphate + 5 H(+)(out). Produces ATP from ADP in the presence of a proton gradient across the membrane. The alpha chain is a regulatory subunit. This chain is ATP synthase subunit alpha, found in Francisella tularensis subsp. novicida (strain U112).